The primary structure comprises 168 residues: Protein FAM163A (168 aa).

A helical membrane pass occupies residues 6–26 (VVITGGILATVILLCIIAVLC).

Belongs to the FAM163 family.

Its subcellular location is the membrane. The chain is Protein FAM163A (Fam163a) from Mus musculus (Mouse).